Consider the following 330-residue polypeptide: DNA-directed RNA polymerase subunit alpha (330 aa).

Residues 1–236 (MQGSVTEFLK…EQLDAFVDLR (236 aa)) are alpha N-terminal domain (alpha-NTD). The alpha C-terminal domain (alpha-CTD) stretch occupies residues 250 to 330 (FDPILLRPVD…NWPPASIAED (81 aa)).

The protein belongs to the RNA polymerase alpha chain family. As to quaternary structure, homodimer. The RNAP catalytic core consists of 2 alpha, 1 beta, 1 beta' and 1 omega subunit. When a sigma factor is associated with the core the holoenzyme is formed, which can initiate transcription.

The catalysed reaction is RNA(n) + a ribonucleoside 5'-triphosphate = RNA(n+1) + diphosphate. Its function is as follows. DNA-dependent RNA polymerase catalyzes the transcription of DNA into RNA using the four ribonucleoside triphosphates as substrates. In Vibrio cholerae serotype O1 (strain ATCC 39315 / El Tor Inaba N16961), this protein is DNA-directed RNA polymerase subunit alpha.